Reading from the N-terminus, the 371-residue chain is Queuine tRNA-ribosyltransferase (371 aa).

Aspartate 89 (proton acceptor) is an active-site residue. Substrate-binding positions include aspartate 89–phenylalanine 93, aspartate 143, glutamine 185, and glycine 212. Positions glycine 243–aspartate 249 are RNA binding. The Nucleophile role is filled by aspartate 262. The tract at residues threonine 267–arginine 271 is RNA binding; important for wobble base 34 recognition. Residues cysteine 300, cysteine 302, cysteine 305, and histidine 331 each coordinate Zn(2+).

The protein belongs to the queuine tRNA-ribosyltransferase family. In terms of assembly, homodimer. Within each dimer, one monomer is responsible for RNA recognition and catalysis, while the other monomer binds to the replacement base PreQ1. Requires Zn(2+) as cofactor.

The catalysed reaction is 7-aminomethyl-7-carbaguanine + guanosine(34) in tRNA = 7-aminomethyl-7-carbaguanosine(34) in tRNA + guanine. Its pathway is tRNA modification; tRNA-queuosine biosynthesis. Its function is as follows. Catalyzes the base-exchange of a guanine (G) residue with the queuine precursor 7-aminomethyl-7-deazaguanine (PreQ1) at position 34 (anticodon wobble position) in tRNAs with GU(N) anticodons (tRNA-Asp, -Asn, -His and -Tyr). Catalysis occurs through a double-displacement mechanism. The nucleophile active site attacks the C1' of nucleotide 34 to detach the guanine base from the RNA, forming a covalent enzyme-RNA intermediate. The proton acceptor active site deprotonates the incoming PreQ1, allowing a nucleophilic attack on the C1' of the ribose to form the product. After dissociation, two additional enzymatic reactions on the tRNA convert PreQ1 to queuine (Q), resulting in the hypermodified nucleoside queuosine (7-(((4,5-cis-dihydroxy-2-cyclopenten-1-yl)amino)methyl)-7-deazaguanosine). The sequence is that of Queuine tRNA-ribosyltransferase from Azotobacter vinelandii (strain DJ / ATCC BAA-1303).